A 252-amino-acid chain; its full sequence is Chaplin-A (252 aa).

The first 20 residues, 1–20 (MVAAAAATGILSLCGSPALA), serve as a signal peptide directing secretion. One can recognise a Chaplin 1 domain in the interval 31 to 71 (SPGAVSGNALQVPVDVPVNACGNTVDVIAALNPAFGNECEN). Disordered regions lie at residues 71–121 (NASD…GNNA) and 150–224 (CEND…GSEG). A compositionally biased stretch (low complexity) spans 86 to 108 (EDASSSSSSSTSASSSGSHADGA). The Chaplin 2 domain occupies 112–152 (SPGVGSGNNAQVPVDVPVNLCGNTVDVIAALNPVFGNKCEN). Acidic residues predominate over residues 153-165 (DAEEPPGYGEEEP). Residues 210–224 (QTEQPPALAETGSEG) show a composition bias toward low complexity. Residues 217 to 221 (LAETG) carry the LPXTG sorting signal motif. 2 propeptides (removed by sortase) span residues 219–252 (ETGS…LSGR) and 221–252 (GSEG…LSGR). Position 220 is a pentaglycyl murein peptidoglycan amidated threonine (Thr220).

Belongs to the chaplin family. Long chaplin subfamily.

The protein localises to the secreted. It localises to the cell wall. One of 8 partially redundant surface-active proteins required for efficient formation of aerial mycelium; the short chaplins assemble into a hydrophobic, amyloidal fibrillar surface layer that envelopes and protects aerial hyphae and spores, presumably anchored to the long chaplins. Chaplins have an overlapping function with the surface-active SapB peptide; chaplins are essential on minimal medium while on rich medium both chaplins and SapB are required for efficient aerial hyphae formation. A minimal chaplin strain capable of forming aerial mycelium/hyphae on minimal medium contains ChpC, ChpE and ChpH. The strain also has restored rodlet formation on the hyphae surface. A second minimal chaplin strain with ChpA, ChpD and ChpE makes slightly less robust hyphae. The long chaplins (ChpA, ChpB, ChpC) are not absolutely necessary for short chaplin localization or rodlet formation, but probably play a role in initiating aerial hyphae development. Chaplins are also involved in cell attachment to a hydrophobic surface. This is Chaplin-A from Streptomyces coelicolor (strain ATCC BAA-471 / A3(2) / M145).